Reading from the N-terminus, the 429-residue chain is Citrate synthase, plasmid (429 aa).

Catalysis depends on residues H306 and D364.

It belongs to the citrate synthase family.

The enzyme catalyses oxaloacetate + acetyl-CoA + H2O = citrate + CoA + H(+). It functions in the pathway carbohydrate metabolism; tricarboxylic acid cycle; isocitrate from oxaloacetate: step 1/2. Its function is as follows. The exact function of the plasmid-encoded citrate synthase is not clear, it could help nodulation by allowing the bacteria to use citrate as a chelator of iron and calcium. In Rhizobium tropici, this protein is Citrate synthase, plasmid (pcsA).